The primary structure comprises 175 residues: ATP synthase subunit b (175 aa).

A helical transmembrane segment spans residues 20–40 (LIFWTAVTFVIVLLILKQLAW).

Belongs to the ATPase B chain family. F-type ATPases have 2 components, F(1) - the catalytic core - and F(0) - the membrane proton channel. F(1) has five subunits: alpha(3), beta(3), gamma(1), delta(1), epsilon(1). F(0) has four main subunits: a(1), b(2) and c(10-14). The alpha and beta chains form an alternating ring which encloses part of the gamma chain. F(1) is attached to F(0) by a central stalk formed by the gamma and epsilon chains, while a peripheral stalk is formed by the delta and b chains.

The protein localises to the cell inner membrane. Functionally, f(1)F(0) ATP synthase produces ATP from ADP in the presence of a proton or sodium gradient. F-type ATPases consist of two structural domains, F(1) containing the extramembraneous catalytic core and F(0) containing the membrane proton channel, linked together by a central stalk and a peripheral stalk. During catalysis, ATP synthesis in the catalytic domain of F(1) is coupled via a rotary mechanism of the central stalk subunits to proton translocation. Its function is as follows. Component of the F(0) channel, it forms part of the peripheral stalk, linking F(1) to F(0). The sequence is that of ATP synthase subunit b from Chlorobium limicola (strain DSM 245 / NBRC 103803 / 6330).